Here is a 5098-residue protein sequence, read N- to C-terminus: Malformin synthetase mlfA (5098 aa).

Residues 225–616 (ERHAANRPHS…CGRADTQVKL (392 aa)) are adenylation 1. The 74-residue stretch at 756–829 (SRLEQEIQLA…EAASLAKVQE (74 aa)) folds into the Carrier 1 domain. Residue Ser-790 is modified to O-(pantetheine 4'-phosphoryl)serine. The segment at 867–1298 (EDVFPCTTMQ…ALDSLTLLQA (432 aa)) is condensation 1. The segment at 1326–1715 (DGWVTRQPES…GRKDTQVKLR (390 aa)) is adenylation 2. Residues 1853–1930 (TAASELERTL…QLAAEFGEPA (78 aa)) enclose the Carrier 2 domain. The residue at position 1890 (Ser-1890) is an O-(pantetheine 4'-phosphoryl)serine. Disordered regions lie at residues 1930–1960 (AGQS…DGVD) and 1993–2022 (GSSS…RVVS). Composition is skewed to low complexity over residues 1933 to 1957 (SASS…STND) and 1993 to 2011 (GSSS…SSSS). The segment at 2063–2478 (EDIYPATALQ…ALSHSDRQTL (416 aa)) is condensation 2. The segment at 2501–2893 (VRTPHAPAVC…IGRRDGQLKL (393 aa)) is adenylation 3. Residues 3029–3105 (RPVTAQEREM…QLMRHLSATR (77 aa)) enclose the Carrier 3 domain. Ser-3066 carries the post-translational modification O-(pantetheine 4'-phosphoryl)serine. Condensation regions lie at residues 3122–3587 (WVAL…TYDQ) and 3608–4027 (NIYP…EQLM). The segment at 4052-4442 (HASREAVCAW…VGRKDNQIKF (391 aa)) is adenylation 4. The region spanning 4576 to 4652 (MPSTAAERKM…DLAYRTTNLV (77 aa)) is the Carrier 4 domain. Position 4613 is an O-(pantetheine 4'-phosphoryl)serine (Ser-4613). Residues 4689–5016 (DVLPTTSFQR…LQTIVQHQNN (328 aa)) are condensation 5.

It belongs to the NRP synthetase family.

It functions in the pathway secondary metabolite biosynthesis. Nonribosomal peptide synthetase; part of the gene cluster that mediates the biosynthesis of malformins, cyclic pentapeptides with a disulfide bond between 2 consecutive cysteins, that show potential anti-tumor as well as antimalarial and antitrypanosomal properties. The nonribosomal peptide synthetase mlfA is responsible of the formation of the cyclic pentapeptide. The malformin biosynthesis clusters in malformin-producing fungi also contain enzymes involved in the formation of the disulfide bond between the two consecutive cysteins within malformins, in addition to additional tailoring enzymes such as methyltransferases or oxidoreductases. They are also composed of up to 4 major facilitator superfamily transporters, and transcription factors probably involved in the regulation of the expression of those clusters. The polypeptide is Malformin synthetase mlfA (Aspergillus homomorphus (strain CBS 101889)).